The following is a 472-amino-acid chain: Tyrosine--tRNA ligase, mitochondrial (472 aa).

Tyr-72 contacts L-tyrosine. Position 76 (Asp-76) interacts with ATP. Positions Pro-77–His-86 match the 'HIGH' region motif. Positions 116, 216, 220, 223, and 242 each coordinate L-tyrosine. Residues Ile-269 and Lys-279 each contribute to the ATP site. The 'KMSKS' region signature appears at Lys-276 to Ser-280. N6-acetyllysine is present on residues Lys-350 and Lys-362.

It belongs to the class-I aminoacyl-tRNA synthetase family. Homodimer.

It is found in the mitochondrion matrix. It carries out the reaction tRNA(Tyr) + L-tyrosine + ATP = L-tyrosyl-tRNA(Tyr) + AMP + diphosphate + H(+). Catalyzes the attachment of tyrosine to tRNA(Tyr) in a two-step reaction: tyrosine is first activated by ATP to form Tyr-AMP and then transferred to the acceptor end of tRNA(Tyr). The chain is Tyrosine--tRNA ligase, mitochondrial (Yars2) from Mus musculus (Mouse).